We begin with the raw amino-acid sequence, 576 residues long: Arginine--tRNA ligase (576 aa).

The 'HIGH' region signature appears at 122 to 132; the sequence is PNVAKQMHVGH.

It belongs to the class-I aminoacyl-tRNA synthetase family. As to quaternary structure, monomer.

Its subcellular location is the cytoplasm. It carries out the reaction tRNA(Arg) + L-arginine + ATP = L-arginyl-tRNA(Arg) + AMP + diphosphate. This Photorhabdus laumondii subsp. laumondii (strain DSM 15139 / CIP 105565 / TT01) (Photorhabdus luminescens subsp. laumondii) protein is Arginine--tRNA ligase.